The primary structure comprises 361 residues: Flagellar P-ring protein (361 aa).

The first 18 residues, 1–18 (MRKFTILLMLLLASSAQA), serve as a signal peptide directing secretion.

Belongs to the FlgI family. In terms of assembly, the basal body constitutes a major portion of the flagellar organelle and consists of four rings (L,P,S, and M) mounted on a central rod.

Its subcellular location is the periplasm. The protein localises to the bacterial flagellum basal body. In terms of biological role, assembles around the rod to form the L-ring and probably protects the motor/basal body from shearing forces during rotation. The chain is Flagellar P-ring protein from Vibrio cholerae serotype O1 (strain ATCC 39541 / Classical Ogawa 395 / O395).